Here is a 394-residue protein sequence, read N- to C-terminus: 1-deoxy-D-xylulose 5-phosphate reductoisomerase (394 aa).

The NADPH site is built by T10, G11, S12, I13, G38, R39, N40, and N123. K124 contributes to the 1-deoxy-D-xylulose 5-phosphate binding site. Residue E125 coordinates NADPH. D149 serves as a coordination point for Mn(2+). Residues S150, E151, S175, and H198 each coordinate 1-deoxy-D-xylulose 5-phosphate. Residue E151 coordinates Mn(2+). Position 204 (G204) interacts with NADPH. 1-deoxy-D-xylulose 5-phosphate-binding residues include S211, N216, K217, and E220. Mn(2+) is bound at residue E220.

Belongs to the DXR family. Mg(2+) is required as a cofactor. Mn(2+) serves as cofactor.

It carries out the reaction 2-C-methyl-D-erythritol 4-phosphate + NADP(+) = 1-deoxy-D-xylulose 5-phosphate + NADPH + H(+). It functions in the pathway isoprenoid biosynthesis; isopentenyl diphosphate biosynthesis via DXP pathway; isopentenyl diphosphate from 1-deoxy-D-xylulose 5-phosphate: step 1/6. Functionally, catalyzes the NADPH-dependent rearrangement and reduction of 1-deoxy-D-xylulose-5-phosphate (DXP) to 2-C-methyl-D-erythritol 4-phosphate (MEP). The polypeptide is 1-deoxy-D-xylulose 5-phosphate reductoisomerase (Cereibacter sphaeroides (strain ATCC 17029 / ATH 2.4.9) (Rhodobacter sphaeroides)).